A 232-amino-acid polypeptide reads, in one-letter code: MENQPKLNSSKEVIAFLAERFPHCFSAEGEARPLKIGIFQDLVDRVAGEMNLSKTQLRSALRLYTSSWRYLYGVKPGATRVDLDGNPCGELDEQHVEHARKQLEEAKARVQAQRAEQQAKKREAAAAAGEKEDAPPRERKPRPTTPRRKEGAERKPRAQKPVEKAPKTVKAPREEQHTPVSDISALTVGQALKVKAGQNAMDATVLEITKDGVRVQLNSGMSLIVRAEHLVF.

The tract at residues 105-182 (EAKARVQAQR…REEQHTPVSD (78 aa)) is disordered. Basic and acidic residues-rich tracts occupy residues 117–138 (QQAK…PPRE) and 147–177 (RRKE…EEQH).

This sequence belongs to the ProQ family.

The protein localises to the cytoplasm. In terms of biological role, RNA chaperone with significant RNA binding, RNA strand exchange and RNA duplexing activities. May regulate ProP activity through an RNA-based, post-transcriptional mechanism. In Escherichia coli O139:H28 (strain E24377A / ETEC), this protein is RNA chaperone ProQ.